We begin with the raw amino-acid sequence, 389 residues long: PqqA peptide cyclase (389 aa).

Residues 20–235 form the Radical SAM core domain; that stretch reads VGLPLWLLAE…TNEYRARLEA (216 aa). 3 residues coordinate [4Fe-4S] cluster: cysteine 34, cysteine 38, and cysteine 41.

Belongs to the radical SAM superfamily. PqqE family. As to quaternary structure, interacts with PqqD. The interaction is necessary for activity of PqqE. The cofactor is [4Fe-4S] cluster.

It catalyses the reaction [PQQ precursor protein] + S-adenosyl-L-methionine = E-Y cross-linked-[PQQ precursor protein] + 5'-deoxyadenosine + L-methionine + H(+). It participates in cofactor biosynthesis; pyrroloquinoline quinone biosynthesis. In terms of biological role, catalyzes the cross-linking of a glutamate residue and a tyrosine residue in the PqqA protein as part of the biosynthesis of pyrroloquinoline quinone (PQQ). The sequence is that of PqqA peptide cyclase from Pseudomonas fluorescens (strain ATCC BAA-477 / NRRL B-23932 / Pf-5).